The following is a 227-amino-acid chain: Phosphatidate cytidylyltransferase (227 aa).

Transmembrane regions (helical) follow at residues 31–51 (FVIA…LVGM), 65–85 (IPYL…LTFL), 93–113 (WLIM…MIGG), 131–151 (WSGL…ASFI), 165–185 (IYLF…DLFI), and 206–226 (GVLD…FISI).

The protein belongs to the CDS family.

The protein localises to the cell membrane. The enzyme catalyses a 1,2-diacyl-sn-glycero-3-phosphate + CTP + H(+) = a CDP-1,2-diacyl-sn-glycerol + diphosphate. Its pathway is phospholipid metabolism; CDP-diacylglycerol biosynthesis; CDP-diacylglycerol from sn-glycerol 3-phosphate: step 3/3. The sequence is that of Phosphatidate cytidylyltransferase (cdsA) from Rickettsia felis (strain ATCC VR-1525 / URRWXCal2) (Rickettsia azadi).